The following is a 199-amino-acid chain: FMN-dependent NADH:quinone oxidoreductase 1 (199 aa).

Residues Ser10, 17–19 (SNS), and 87–90 (MYNF) contribute to the FMN site.

Belongs to the azoreductase type 1 family. In terms of assembly, homodimer. The cofactor is FMN.

The enzyme catalyses 2 a quinone + NADH + H(+) = 2 a 1,4-benzosemiquinone + NAD(+). The catalysed reaction is N,N-dimethyl-1,4-phenylenediamine + anthranilate + 2 NAD(+) = 2-(4-dimethylaminophenyl)diazenylbenzoate + 2 NADH + 2 H(+). Functionally, quinone reductase that provides resistance to thiol-specific stress caused by electrophilic quinones. Also exhibits azoreductase activity. Catalyzes the reductive cleavage of the azo bond in aromatic azo compounds to the corresponding amines. In Mesoplasma florum (strain ATCC 33453 / NBRC 100688 / NCTC 11704 / L1) (Acholeplasma florum), this protein is FMN-dependent NADH:quinone oxidoreductase 1.